The following is a 444-amino-acid chain: Methylenetetrahydrofolate--tRNA-(uracil-5-)-methyltransferase TrmFO (444 aa).

10–15 (GAGLAG) lines the FAD pocket.

The protein belongs to the MnmG family. TrmFO subfamily. FAD is required as a cofactor.

The protein localises to the cytoplasm. It catalyses the reaction uridine(54) in tRNA + (6R)-5,10-methylene-5,6,7,8-tetrahydrofolate + NADH + H(+) = 5-methyluridine(54) in tRNA + (6S)-5,6,7,8-tetrahydrofolate + NAD(+). The enzyme catalyses uridine(54) in tRNA + (6R)-5,10-methylene-5,6,7,8-tetrahydrofolate + NADPH + H(+) = 5-methyluridine(54) in tRNA + (6S)-5,6,7,8-tetrahydrofolate + NADP(+). Its function is as follows. Catalyzes the folate-dependent formation of 5-methyl-uridine at position 54 (M-5-U54) in all tRNAs. The chain is Methylenetetrahydrofolate--tRNA-(uracil-5-)-methyltransferase TrmFO from Streptococcus pneumoniae (strain 70585).